Reading from the N-terminus, the 77-residue chain is Serine protease inhibitor 3 (77 aa).

A signal peptide spans 1–17; it reads MMFTPLIVLTLLVLATA. 4 disulfides stabilise this stretch: cysteine 21–cysteine 53, cysteine 30–cysteine 48, cysteine 33–cysteine 44, and cysteine 55–cysteine 68. The TIL domain maps to 21–74; it reads CGPNEQWSGCPKCELQSGESDKPCATICGEPKCYCSPDKYRRIPDGRCIRKIQC.

It localises to the secreted. In terms of biological role, defends the organism against the host's proteinases. The sequence is that of Serine protease inhibitor 3 from Anisakis simplex (Herring worm).